A 98-amino-acid chain; its full sequence is Citrate lyase acyl carrier protein (98 aa).

Ser14 carries the post-translational modification O-(phosphoribosyl dephospho-coenzyme A)serine.

This sequence belongs to the CitD family. As to quaternary structure, oligomer with a subunit composition of (alpha,beta,gamma)6.

The protein localises to the cytoplasm. Its function is as follows. Covalent carrier of the coenzyme of citrate lyase. The chain is Citrate lyase acyl carrier protein from Escherichia coli O127:H6 (strain E2348/69 / EPEC).